We begin with the raw amino-acid sequence, 617 residues long: tRNA 5-methylaminomethyl-2-thiouridine biosynthesis bifunctional protein MnmC (617 aa).

Residues 1–226 are tRNA (mnm(5)s(2)U34)-methyltransferase; that stretch reads MLDWQNGQLY…KREMLQGDLP (226 aa). Positions 241-617 are FAD-dependent cmnm(5)s(2)U34 oxidoreductase; the sequence is IGGGIAGCAA…SPAIPVSIKG (377 aa).

It in the N-terminal section; belongs to the methyltransferase superfamily. tRNA (mnm(5)s(2)U34)-methyltransferase family. The protein in the C-terminal section; belongs to the DAO family. FAD serves as cofactor.

Its subcellular location is the cytoplasm. The enzyme catalyses 5-aminomethyl-2-thiouridine(34) in tRNA + S-adenosyl-L-methionine = 5-methylaminomethyl-2-thiouridine(34) in tRNA + S-adenosyl-L-homocysteine + H(+). Functionally, catalyzes the last two steps in the biosynthesis of 5-methylaminomethyl-2-thiouridine (mnm(5)s(2)U) at the wobble position (U34) in tRNA. Catalyzes the FAD-dependent demodification of cmnm(5)s(2)U34 to nm(5)s(2)U34, followed by the transfer of a methyl group from S-adenosyl-L-methionine to nm(5)s(2)U34, to form mnm(5)s(2)U34. This Nitrosospira multiformis (strain ATCC 25196 / NCIMB 11849 / C 71) protein is tRNA 5-methylaminomethyl-2-thiouridine biosynthesis bifunctional protein MnmC.